Here is a 398-residue protein sequence, read N- to C-terminus: Glia-derived nexin (398 aa).

The signal sequence occupies residues 1 to 19 (MNWHLPLFLLASVTLPSIC). Residues Asn118 and Asn159 are each glycosylated (N-linked (GlcNAc...) asparagine).

It belongs to the serpin family.

Its subcellular location is the secreted. It is found in the extracellular space. Its function is as follows. Serine protease inhibitor with activity toward thrombin, trypsin, and urokinase. Promotes neurite extension by inhibiting thrombin. Binds heparin. This chain is Glia-derived nexin (SERPINE2), found in Homo sapiens (Human).